The following is a 98-amino-acid chain: NADH-ubiquinone oxidoreductase chain 4L (98 aa).

3 consecutive transmembrane segments (helical) span residues M1 to I21, S29 to L49, and I61 to V81.

It belongs to the complex I subunit 4L family. In terms of assembly, core subunit of respiratory chain NADH dehydrogenase (Complex I) which is composed of 45 different subunits.

It is found in the mitochondrion inner membrane. The enzyme catalyses a ubiquinone + NADH + 5 H(+)(in) = a ubiquinol + NAD(+) + 4 H(+)(out). Core subunit of the mitochondrial membrane respiratory chain NADH dehydrogenase (Complex I) which catalyzes electron transfer from NADH through the respiratory chain, using ubiquinone as an electron acceptor. Part of the enzyme membrane arm which is embedded in the lipid bilayer and involved in proton translocation. This Herpestes javanicus (Small Indian mongoose) protein is NADH-ubiquinone oxidoreductase chain 4L (MT-ND4L).